The sequence spans 86 residues: Small ribosomal subunit protein uS15 (86 aa).

Polar residues predominate over residues 1–10 (MSIDTQSIIE). Positions 1 to 21 (MSIDTQSIIENNKRSAHDTGS) are disordered.

This sequence belongs to the universal ribosomal protein uS15 family. Part of the 30S ribosomal subunit. Forms a bridge to the 50S subunit in the 70S ribosome, contacting the 23S rRNA.

Its function is as follows. One of the primary rRNA binding proteins, it binds directly to 16S rRNA where it helps nucleate assembly of the platform of the 30S subunit by binding and bridging several RNA helices of the 16S rRNA. Forms an intersubunit bridge (bridge B4) with the 23S rRNA of the 50S subunit in the ribosome. The polypeptide is Small ribosomal subunit protein uS15 (Xylella fastidiosa (strain 9a5c)).